We begin with the raw amino-acid sequence, 146 residues long: Large ribosomal subunit protein uL15 (146 aa).

Residues Met1–Gly56 are disordered. Residues Arg24–Ala34 show a composition bias toward gly residues.

It belongs to the universal ribosomal protein uL15 family. In terms of assembly, part of the 50S ribosomal subunit.

Binds to the 23S rRNA. This is Large ribosomal subunit protein uL15 from Bordetella bronchiseptica (strain ATCC BAA-588 / NCTC 13252 / RB50) (Alcaligenes bronchisepticus).